The following is a 187-amino-acid chain: Elongation factor P (187 aa).

It belongs to the elongation factor P family.

It localises to the cytoplasm. The protein operates within protein biosynthesis; polypeptide chain elongation. Functionally, involved in peptide bond synthesis. Stimulates efficient translation and peptide-bond synthesis on native or reconstituted 70S ribosomes in vitro. Probably functions indirectly by altering the affinity of the ribosome for aminoacyl-tRNA, thus increasing their reactivity as acceptors for peptidyl transferase. The polypeptide is Elongation factor P (Rhodococcus erythropolis (strain PR4 / NBRC 100887)).